A 381-amino-acid polypeptide reads, in one-letter code: Spermidine/putrescine import ATP-binding protein PotA (381 aa).

One can recognise an ABC transporter domain in the interval 22–252 (VELRNVFKFF…PKTSFVADFI (231 aa)). 54–61 (GPSGCGKT) is a binding site for ATP.

Belongs to the ABC transporter superfamily. Spermidine/putrescine importer (TC 3.A.1.11.1) family. In terms of assembly, the complex is composed of two ATP-binding proteins (PotA), two transmembrane proteins (PotB and PotC) and a solute-binding protein (PotD).

It is found in the cell inner membrane. The catalysed reaction is ATP + H2O + polyamine-[polyamine-binding protein]Side 1 = ADP + phosphate + polyamineSide 2 + [polyamine-binding protein]Side 1.. Functionally, part of the ABC transporter complex PotABCD involved in spermidine/putrescine import. Responsible for energy coupling to the transport system. The protein is Spermidine/putrescine import ATP-binding protein PotA of Nostoc sp. (strain PCC 7120 / SAG 25.82 / UTEX 2576).